The chain runs to 96 residues: Prokineticin Bm8-a (96 aa).

Residues 1–19 form the signal peptide; the sequence is MKCFAQIVVLLLVIAFSHG. 5 disulfides stabilise this stretch: Cys-26–Cys-38, Cys-32–Cys-50, Cys-37–Cys-78, Cys-60–Cys-86, and Cys-80–Cys-95.

This sequence belongs to the AVIT (prokineticin) family. Expressed by the skin glands.

The protein localises to the secreted. In terms of biological role, potent agonist for both PKR1/PROKR1 and PKR2/PROKR2, and inducer of a potent and long-lasting hyperalgesia. Also potentiates capsaicin-induced TRPV1 current, when tested on DRG neurons. At subnanomolar concentrations, this protein both induces potent chemotaxis of macrophages and stimulates LPS-induced production of the pro-inflammatory cytokines IL-1 and IL-12. In vivo, potently stimulates the contraction of the guinea-pig gastrointestinal (GI) smooth muscle (nanomolar concentration). In Bombina maxima (Giant fire-bellied toad), this protein is Prokineticin Bm8-a.